Here is a 203-residue protein sequence, read N- to C-terminus: Glycerol-3-phosphate acyltransferase (203 aa).

The next 6 helical transmembrane spans lie at Asn-3–Ala-23, Ile-61–Leu-81, Val-87–Phe-107, Gly-118–Val-138, Ile-144–His-164, and Thr-172–Val-192.

Belongs to the PlsY family. In terms of assembly, probably interacts with PlsX.

It is found in the cell inner membrane. The enzyme catalyses an acyl phosphate + sn-glycerol 3-phosphate = a 1-acyl-sn-glycero-3-phosphate + phosphate. It functions in the pathway lipid metabolism; phospholipid metabolism. Catalyzes the transfer of an acyl group from acyl-phosphate (acyl-PO(4)) to glycerol-3-phosphate (G3P) to form lysophosphatidic acid (LPA). This enzyme utilizes acyl-phosphate as fatty acyl donor, but not acyl-CoA or acyl-ACP. The chain is Glycerol-3-phosphate acyltransferase from Campylobacter concisus (strain 13826).